The sequence spans 142 residues: Cell division protein SepF (142 aa).

Belongs to the SepF family. As to quaternary structure, homodimer. Interacts with FtsZ.

The protein resides in the cytoplasm. Cell division protein that is part of the divisome complex and is recruited early to the Z-ring. Probably stimulates Z-ring formation, perhaps through the cross-linking of FtsZ protofilaments. Its function overlaps with FtsA. This is Cell division protein SepF from Syntrophomonas wolfei subsp. wolfei (strain DSM 2245B / Goettingen).